Consider the following 369-residue polypeptide: Virion membrane protein A16 homolog (369 aa).

Gly2 carries N-myristoyl glycine; by host lipidation. Residues 2 to 330 (GQHVSNITVI…SYNKEAKLPS (329 aa)) lie on the Virion surface side of the membrane. The helical transmembrane segment at 331–351 (FFSIIPVCIVLLCLFVLFYFL) threads the bilayer. Over 352–369 (RIYDAKVINSNTINVYRK) the chain is Intravirion.

The protein belongs to the poxviridae A16/G9/J5 family. In terms of assembly, part of a stable entry-fusion complex (EFC) which is at least composed of proteins A16, A21, A28, G3, G9, H2, J5, and L5. Formation of the viral membrane is necessary for the assembly of the complex. Interacts with G9. Most cysteines are linked by disulfide bonds. They are created by the viral disulfide bond formation pathway, a poxvirus-specific redox pathway that operates on the cytoplasmic side of the MV membranes.

The protein localises to the virion membrane. Functionally, envelope protein part of the entry-fusion complex responsible for the virus membrane fusion with host cell membrane during virus entry. Also plays a role in cell-cell fusion (syncytium formation). This Fowlpox virus (strain NVSL) (FPV) protein is Virion membrane protein A16 homolog.